The chain runs to 211 residues: Peptide methionine sulfoxide reductase MsrA (211 aa).

The active site involves C52.

This sequence belongs to the MsrA Met sulfoxide reductase family.

The catalysed reaction is L-methionyl-[protein] + [thioredoxin]-disulfide + H2O = L-methionyl-(S)-S-oxide-[protein] + [thioredoxin]-dithiol. The enzyme catalyses [thioredoxin]-disulfide + L-methionine + H2O = L-methionine (S)-S-oxide + [thioredoxin]-dithiol. Has an important function as a repair enzyme for proteins that have been inactivated by oxidation. Catalyzes the reversible oxidation-reduction of methionine sulfoxide in proteins to methionine. The chain is Peptide methionine sulfoxide reductase MsrA from Photobacterium profundum (strain SS9).